Here is a 55-residue protein sequence, read N- to C-terminus: ATP synthase F(0) complex subunit 8 (55 aa).

Residues 4–24 form a helical membrane-spanning segment; sequence LNPHPWFSIFITSWLILIIIL.

The protein belongs to the ATPase protein 8 family. Component of the ATP synthase complex composed at least of ATP5F1A/subunit alpha, ATP5F1B/subunit beta, ATP5MC1/subunit c (homooctomer), MT-ATP6/subunit a, MT-ATP8/subunit 8, ATP5ME/subunit e, ATP5MF/subunit f, ATP5MG/subunit g, ATP5MK/subunit k, ATP5MJ/subunit j, ATP5F1C/subunit gamma, ATP5F1D/subunit delta, ATP5F1E/subunit epsilon, ATP5PF/subunit F6, ATP5PB/subunit b, ATP5PD/subunit d, ATP5PO/subunit OSCP. ATP synthase complex consists of a soluble F(1) head domain (subunits alpha(3) and beta(3)) - the catalytic core - and a membrane F(0) domain - the membrane proton channel (subunits c, a, 8, e, f, g, k and j). These two domains are linked by a central stalk (subunits gamma, delta, and epsilon) rotating inside the F1 region and a stationary peripheral stalk (subunits F6, b, d, and OSCP).

The protein resides in the mitochondrion membrane. Functionally, subunit 8, of the mitochondrial membrane ATP synthase complex (F(1)F(0) ATP synthase or Complex V) that produces ATP from ADP in the presence of a proton gradient across the membrane which is generated by electron transport complexes of the respiratory chain. ATP synthase complex consist of a soluble F(1) head domain - the catalytic core - and a membrane F(1) domain - the membrane proton channel. These two domains are linked by a central stalk rotating inside the F(1) region and a stationary peripheral stalk. During catalysis, ATP synthesis in the catalytic domain of F(1) is coupled via a rotary mechanism of the central stalk subunits to proton translocation. In vivo, can only synthesize ATP although its ATP hydrolase activity can be activated artificially in vitro. Part of the complex F(0) domain. This chain is ATP synthase F(0) complex subunit 8, found in Pelomedusa subrufa (African side-necked turtle).